We begin with the raw amino-acid sequence, 813 residues long: Striatin-interacting protein 1 homolog (813 aa).

Disordered stretches follow at residues 1-41 and 307-379; these read MDGV…SEAP and RAAS…RDEV. Residues 9–18 are compositionally biased toward polar residues; sequence NNKQKQNQML. Residues 22-35 are compositionally biased toward basic and acidic residues; sequence MRGEFTRNQRKDSE. Positions 307 to 316 are enriched in low complexity; that stretch reads RAASPPASAS. S310 carries the phosphoserine modification. The span at 331-352 shows a compositional bias: basic and acidic residues; it reads KALIKQDNLDTFNEKDPYKADD. A compositionally biased stretch (acidic residues) spans 353–367; sequence SHEDEEENDDNDNSL.

Belongs to the STRIP family. As to quaternary structure, part of the core of STRIPAK complexes composed of PP2A catalytic and scaffolding subunits, the striatins (PP2A regulatory subunits), the striatin-associated proteins MOB4, STRIP1 and STRIP2, PDCD10 and members of the STE20 kinases, such as STK24 and STK26.

The protein localises to the cytoplasm. Plays a role in the regulation of cell morphology and cytoskeletal organization. Required in the cortical actin filament dynamics and cell shape. Part of the striatin-interacting phosphatase and kinase (STRIPAK) complexes. STRIPAK complexes have critical roles in protein (de)phosphorylation and are regulators of multiple signaling pathways including Hippo, MAPK, nuclear receptor and cytoskeleton remodeling. Different types of STRIPAK complexes are involved in a variety of biological processes such as cell growth, differentiation, apoptosis, metabolism and immune regulation. This Danio rerio (Zebrafish) protein is Striatin-interacting protein 1 homolog (strip1).